Reading from the N-terminus, the 166-residue chain is Ribosomal RNA large subunit methyltransferase H (166 aa).

S-adenosyl-L-methionine-binding positions include Leu-85, Gly-116, and 135 to 140; that span reads ISKMTF.

Belongs to the RNA methyltransferase RlmH family. Homodimer.

Its subcellular location is the cytoplasm. It carries out the reaction pseudouridine(1915) in 23S rRNA + S-adenosyl-L-methionine = N(3)-methylpseudouridine(1915) in 23S rRNA + S-adenosyl-L-homocysteine + H(+). Its function is as follows. Specifically methylates the pseudouridine at position 1915 (m3Psi1915) in 23S rRNA. The protein is Ribosomal RNA large subunit methyltransferase H of Francisella tularensis subsp. holarctica (strain FTNF002-00 / FTA).